A 316-amino-acid polypeptide reads, in one-letter code: MNTSITARELFEQQRERLGLRWAAGKSGEKRELEAGNTVSRRPSLAGYLNAIYPNKVQILGTEELSWLDALEPRQRWETIEKIMQSHPLALVLTRNQACPEDLRAAADESGTPLWLSPKRGHELLNHLSYHLARTLAPRVILHGVFMEIYSIGVLITGEAGSGKSELALELLSRGHRLVADDAPEFTQIAPDVLDGTCPELLQDLLEVRGLGVLNVREMFGDTAVKKNKYLRLIVHLTKPMTEPTPHGYERLTGDSGTRHVLDLDVPLITLPVMPGRNLAVLTEAATRLHILRTKGIDPAAMFIARHSNLLERRTP.

Catalysis depends on residues His143 and Lys164. Residue 158 to 165 coordinates ATP; it reads GEAGSGKS. Ser165 is a Mg(2+) binding site. The Proton acceptor; for phosphorylation activity. Proton donor; for dephosphorylation activity role is filled by Asp182. The important for the catalytic mechanism of both phosphorylation and dephosphorylation stretch occupies residues 206–215; sequence LEVRGLGVLN. Glu207 lines the Mg(2+) pocket. The active site involves Arg251. The interval 272-277 is important for the catalytic mechanism of dephosphorylation; it reads PVMPGR.

The protein belongs to the HPrK/P family. In terms of assembly, homohexamer. The cofactor is Mg(2+).

The catalysed reaction is [HPr protein]-L-serine + ATP = [HPr protein]-O-phospho-L-serine + ADP + H(+). It catalyses the reaction [HPr protein]-O-phospho-L-serine + phosphate + H(+) = [HPr protein]-L-serine + diphosphate. Functionally, catalyzes the ATP- as well as the pyrophosphate-dependent phosphorylation of a specific serine residue in HPr, a phosphocarrier protein of the phosphoenolpyruvate-dependent sugar phosphotransferase system (PTS). HprK/P also catalyzes the pyrophosphate-producing, inorganic phosphate-dependent dephosphorylation (phosphorolysis) of seryl-phosphorylated HPr (P-Ser-HPr). This chain is HPr kinase/phosphorylase, found in Stenotrophomonas maltophilia (strain K279a).